Reading from the N-terminus, the 122-residue chain is 5'-AMP-activated protein kinase subunit beta-1 (122 aa).

4 positions are modified to phosphoserine: serine 5, serine 61, serine 66, and serine 73. Residues 33-122 form a glycogen-binding domain region; that stretch reads EVNDKASAQA…TVNNIIQVKK (90 aa). Position 113 is a phosphothreonine (threonine 113).

The protein belongs to the 5'-AMP-activated protein kinase beta subunit family. In terms of assembly, AMPK is a heterotrimer of an alpha catalytic subunit (PRKAA1 or PRKAA2), a beta (PRKAB1 or PRKAB2) and a gamma non-catalytic subunits (PRKAG1, PRKAG2 or PRKAG3). Interacts with FNIP1 and FNIP2. In terms of processing, phosphorylated when associated with the catalytic subunit (PRKAA1 or PRKAA2). Phosphorylated by ULK1; leading to negatively regulate AMPK activity and suggesting the existence of a regulatory feedback loop between ULK1 and AMPK.

Functionally, non-catalytic subunit of AMP-activated protein kinase (AMPK), an energy sensor protein kinase that plays a key role in regulating cellular energy metabolism. In response to reduction of intracellular ATP levels, AMPK activates energy-producing pathways and inhibits energy-consuming processes: inhibits protein, carbohydrate and lipid biosynthesis, as well as cell growth and proliferation. AMPK acts via direct phosphorylation of metabolic enzymes, and by longer-term effects via phosphorylation of transcription regulators. Also acts as a regulator of cellular polarity by remodeling the actin cytoskeleton; probably by indirectly activating myosin. Beta non-catalytic subunit acts as a scaffold on which the AMPK complex assembles, via its C-terminus that bridges alpha (PRKAA1 or PRKAA2) and gamma subunits (PRKAG1, PRKAG2 or PRKAG3). The protein is 5'-AMP-activated protein kinase subunit beta-1 (PRKAB1) of Sus scrofa (Pig).